Here is a 236-residue protein sequence, read N- to C-terminus: Phosphoribosylaminoimidazole-succinocarboxamide synthase (236 aa).

This sequence belongs to the SAICAR synthetase family.

The enzyme catalyses 5-amino-1-(5-phospho-D-ribosyl)imidazole-4-carboxylate + L-aspartate + ATP = (2S)-2-[5-amino-1-(5-phospho-beta-D-ribosyl)imidazole-4-carboxamido]succinate + ADP + phosphate + 2 H(+). The protein operates within purine metabolism; IMP biosynthesis via de novo pathway; 5-amino-1-(5-phospho-D-ribosyl)imidazole-4-carboxamide from 5-amino-1-(5-phospho-D-ribosyl)imidazole-4-carboxylate: step 1/2. The polypeptide is Phosphoribosylaminoimidazole-succinocarboxamide synthase (Cellvibrio japonicus (strain Ueda107) (Pseudomonas fluorescens subsp. cellulosa)).